The sequence spans 711 residues: Zinc finger protein 175 (711 aa).

Residues methionine 1 to proline 11 show a composition bias toward polar residues. Residues methionine 1–glycine 21 are disordered. In terms of domain architecture, KRAB spans valine 27–glutamine 98. The C2H2-type 1; atypical zinc finger occupies aspartate 279–histidine 301. The C2H2-type 2; atypical zinc finger occupies histidine 307–histidine 329. The C2H2-type 3 zinc finger occupies cysteine 335–histidine 357. A Nuclear localization signal motif is present at residues arginine 359–proline 362. 12 C2H2-type zinc fingers span residues tyrosine 363–histidine 385, tyrosine 391–histidine 413, tyrosine 419–histidine 441, tyrosine 447–histidine 469, tyrosine 475–histidine 497, tyrosine 503–histidine 525, histidine 531–histidine 553, tyrosine 559–histidine 581, tyrosine 587–histidine 609, phenylalanine 615–histidine 637, tyrosine 643–histidine 665, and tyrosine 671–histidine 693.

Belongs to the krueppel C2H2-type zinc-finger protein family. As to expression, ubiquitous.

It is found in the cytoplasm. It localises to the nucleus. Down-regulates the expression of several chemokine receptors. Interferes with HIV-1 replication by suppressing Tat-induced viral LTR promoter activity. The polypeptide is Zinc finger protein 175 (ZNF175) (Homo sapiens (Human)).